Here is a 405-residue protein sequence, read N- to C-terminus: Replication factor C large subunit (405 aa).

Position 47 to 54 (47 to 54 (GPPGVGKT)) interacts with ATP.

This sequence belongs to the activator 1 small subunits family. RfcL subfamily. Heteromultimer composed of small subunits (RfcS) and large subunits (RfcL).

Its function is as follows. Part of the RFC clamp loader complex which loads the PCNA sliding clamp onto DNA. The chain is Replication factor C large subunit from Saccharolobus islandicus (strain Y.N.15.51 / Yellowstone #2) (Sulfolobus islandicus).